Here is a 461-residue protein sequence, read N- to C-terminus: F-box protein At3g62230 (461 aa).

Residues 7-55 (VDIISTLSDFLLVLIISNLSFKEALSTSRLSTRWRHICRETRNISFRED) enclose the F-box domain.

Part of a SCF (ASK-cullin-F-box) protein ligase complex. Interacts with ASK4.

The protein resides in the nucleus. It functions in the pathway protein modification; protein ubiquitination. Its function is as follows. Component of SCF(ASK-cullin-F-box) E3 ubiquitin ligase complexes, which may mediate the ubiquitination and subsequent proteasomal degradation of target proteins. The chain is F-box protein At3g62230 from Arabidopsis thaliana (Mouse-ear cress).